The chain runs to 439 residues: Trigger factor (439 aa).

Residues 165–250 (GDFAKFDFEG…LHEIQELKLP (86 aa)) form the PPIase FKBP-type domain.

It belongs to the FKBP-type PPIase family. Tig subfamily.

The protein resides in the cytoplasm. The catalysed reaction is [protein]-peptidylproline (omega=180) = [protein]-peptidylproline (omega=0). In terms of biological role, involved in protein export. Acts as a chaperone by maintaining the newly synthesized protein in an open conformation. Functions as a peptidyl-prolyl cis-trans isomerase. This is Trigger factor from Campylobacter lari (strain RM2100 / D67 / ATCC BAA-1060).